The sequence spans 187 residues: KS71A fimbrillin (187 aa).

An N-terminal signal peptide occupies residues 1–21; it reads MIKSVIAGAVAMAVVSFGANA. A disulfide bridge links C43 with C82.

Belongs to the fimbrial protein family.

It is found in the fimbrium. Its function is as follows. Fimbriae (also called pili), polar filaments radiating from the surface of the bacterium to a length of 0.5-1.5 micrometers and numbering 100-300 per cell, enable bacteria to colonize the epithelium of specific host organs. The chain is KS71A fimbrillin (KS71A) from Escherichia coli.